A 214-amino-acid chain; its full sequence is Probable transaldolase (214 aa).

Lys-83 functions as the Schiff-base intermediate with substrate in the catalytic mechanism.

The protein belongs to the transaldolase family. Type 3B subfamily.

It localises to the cytoplasm. The catalysed reaction is D-sedoheptulose 7-phosphate + D-glyceraldehyde 3-phosphate = D-erythrose 4-phosphate + beta-D-fructose 6-phosphate. Its pathway is carbohydrate degradation; pentose phosphate pathway; D-glyceraldehyde 3-phosphate and beta-D-fructose 6-phosphate from D-ribose 5-phosphate and D-xylulose 5-phosphate (non-oxidative stage): step 2/3. Functionally, transaldolase is important for the balance of metabolites in the pentose-phosphate pathway. This is Probable transaldolase from Streptococcus equi subsp. equi (strain 4047).